The primary structure comprises 332 residues: Nicotianamine synthase 1 (332 aa).

It belongs to the nicotianamine synthase (NAS)-like family. As to expression, expressed in roots.

The enzyme catalyses 3 S-adenosyl-L-methionine = nicotianamine + 3 S-methyl-5'-thioadenosine + 3 H(+). Its function is as follows. Synthesizes nicotianamine, a polyamine that is the first intermediate in the synthesis of the phytosiderophores of the mugineic acid type found in gramineae which serve as a sensor for the physiological iron status within the plant, and/or might be involved in the transport of iron. The polypeptide is Nicotianamine synthase 1 (NAS1) (Oryza sativa subsp. indica (Rice)).